The following is a 372-amino-acid chain: Protein phosphatase Mn(2+)-dependent 1K (372 aa).

The transit peptide at 1 to 29 (MLSAAFITLLRSGGNQVKKRVLLSSILLQ) directs the protein to the mitochondrion. Residues 46-61 (RCSRFDPDGSGQPATW) form a critical for association with the BCKDH complex region. One can recognise a PPM-type phosphatase domain in the interval 94-346 (NVGCASLIGK…DNSTAVVVPF (253 aa)). Positions 127 and 128 each coordinate Mn(2+). Residue Ser248 is modified to Phosphoserine. Mn(2+) is bound by residues Asp298 and Asp337.

It belongs to the PP2C family. In terms of assembly, monomer. Interacts with E1 and E2 components of the branched-chain alpha-ketoacid dehydrogenase (BCKDH) complex; this interaction requires colocalization in mitochondria. Interacts with BCKDHA but not with BCKDHB of the E1 component. Interacts with the 24-meric E2 core composed of DBT monomers with a 24:1 stoichiometry; the N-terminal region (residues 49-61) of PPM1K and C-terminal linker of the lipoyl domain of DBT (residues 145-160) are critical for this interaction, whereas the lipoyl prosthetic group is dispensable. Competes with BCKDK for binding to the E2 core; this interaction is modulated by branched-chain alpha-keto acids. At steady state, BCKDH holoenzyme preferentially binds BCKDK and BCKDHA is phosphorylated. In response to high levels of branched-chain alpha-keto acids, the inhibitory BCKDK is replaced by activating PPM1K leading to BCKDHA dephosphorylation and BCAA degradation. It depends on Mn(2+) as a cofactor. As to expression, highly expressed in the heart, kidney, brain and liver and to a lesser extent in testis, lung, spleen and adipose tissue. Very low amount in muscle (at protein level). Also expressed in the thymus (at protein level) and the diaphragm. Significantly reduced in hypertrophied hearts.

It localises to the mitochondrion matrix. It catalyses the reaction O-phospho-L-seryl-[3-methyl-2-oxobutanoate dehydrogenase] + H2O = L-seryl-[3-methyl-2-oxobutanoate dehydrogenase] + phosphate. The catalysed reaction is O-phospho-L-seryl-[protein] + H2O = L-seryl-[protein] + phosphate. It functions in the pathway protein modification. In terms of biological role, serine/threonine-protein phosphatase component of macronutrients metabolism. Forms a functional kinase and phosphatase pair with BCKDK, serving as a metabolic regulatory node that coordinates branched-chain amino acids (BCAAs) with glucose and lipid metabolism via two distinct phosphoprotein targets: mitochondrial BCKDHA subunit of the branched-chain alpha-ketoacid dehydrogenase (BCKDH) complex and cytosolic ACLY, a lipogenic enzyme of Krebs cycle. At high levels of branched-chain ketoacids, dephosphorylates and activates mitochondrial BCKDH complex, a multisubunit complex consisting of three multimeric components each involved in different steps of BCAA catabolism: E1 composed of BCKDHA and BCKDHB, E2 core composed of DBT monomers, and E3 composed of DLD monomers. Tightly associates with the E2 component of BCKDH complex and dephosphorylates BCKDHA on Ser-334. Regulates the reversible phosphorylation of ACLY in response to changes in cellular carbohydrate abundance such as occurs during fasting to feeding metabolic transition. At fasting state, appears to dephosphorylate ACLY on Ser-455 and inactivate it. Refeeding stimulates MLXIPL/ChREBP transcription factor, leading to increased BCKDK to PPM1K expression ratio, phosphorylation and activation of ACLY that ultimately results in the generation of malonyl-CoA and oxaloacetate immediate substrates of de novo lipogenesis and gluconeogenesis, respectively. Recognizes phosphosites having SxS or RxxS motifs and strictly depends on Mn(2+) ions for the phosphatase activity. Regulates Ca(2+)-induced opening of mitochondrial transition pore and apoptotic cell death. This Mus musculus (Mouse) protein is Protein phosphatase Mn(2+)-dependent 1K.